The chain runs to 210 residues: uncharacterized protein (210 aa).

2 disordered regions span residues 1-21 (MHRLFGRKPPTQPTASLTDAI) and 168-210 (EALQ…STAQ). Positions 21–175 (IDSLDKRSDS…ELEALQQESS (155 aa)) form a coiled coil. A compositionally biased stretch (polar residues) spans 174 to 184 (SSWLGDQSTAE).

This sequence belongs to the SNF7 family.

This is an uncharacterized protein from Schizosaccharomyces pombe (strain 972 / ATCC 24843) (Fission yeast).